Reading from the N-terminus, the 405-residue chain is 4-hydroxy-3-methylbut-2-en-1-yl diphosphate synthase (ferredoxin) (405 aa).

Residues Cys314, Cys317, Cys348, and Glu355 each contribute to the [4Fe-4S] cluster site.

The protein belongs to the IspG family. [4Fe-4S] cluster is required as a cofactor.

It catalyses the reaction (2E)-4-hydroxy-3-methylbut-2-enyl diphosphate + 2 oxidized [2Fe-2S]-[ferredoxin] + H2O = 2-C-methyl-D-erythritol 2,4-cyclic diphosphate + 2 reduced [2Fe-2S]-[ferredoxin] + H(+). Its pathway is isoprenoid biosynthesis; isopentenyl diphosphate biosynthesis via DXP pathway; isopentenyl diphosphate from 1-deoxy-D-xylulose 5-phosphate: step 5/6. Its function is as follows. Converts 2C-methyl-D-erythritol 2,4-cyclodiphosphate (ME-2,4cPP) into 1-hydroxy-2-methyl-2-(E)-butenyl 4-diphosphate. The polypeptide is 4-hydroxy-3-methylbut-2-en-1-yl diphosphate synthase (ferredoxin) (Prochlorococcus marinus subsp. pastoris (strain CCMP1986 / NIES-2087 / MED4)).